Consider the following 108-residue polypeptide: Large ribosomal subunit protein eL30 (108 aa).

It belongs to the eukaryotic ribosomal protein eL30 family.

The sequence is that of Large ribosomal subunit protein eL30 (rpl30e) from Saccharolobus solfataricus (strain ATCC 35092 / DSM 1617 / JCM 11322 / P2) (Sulfolobus solfataricus).